The chain runs to 219 residues: Deoxyribose-phosphate aldolase 1 (219 aa).

Aspartate 87 serves as the catalytic Proton donor/acceptor. Lysine 149 acts as the Schiff-base intermediate with acetaldehyde in catalysis. Lysine 178 acts as the Proton donor/acceptor in catalysis.

The protein belongs to the DeoC/FbaB aldolase family. DeoC type 1 subfamily.

Its subcellular location is the cytoplasm. It catalyses the reaction 2-deoxy-D-ribose 5-phosphate = D-glyceraldehyde 3-phosphate + acetaldehyde. It functions in the pathway carbohydrate degradation; 2-deoxy-D-ribose 1-phosphate degradation; D-glyceraldehyde 3-phosphate and acetaldehyde from 2-deoxy-alpha-D-ribose 1-phosphate: step 2/2. In terms of biological role, catalyzes a reversible aldol reaction between acetaldehyde and D-glyceraldehyde 3-phosphate to generate 2-deoxy-D-ribose 5-phosphate. In Vibrio vulnificus (strain YJ016), this protein is Deoxyribose-phosphate aldolase 1.